A 216-amino-acid chain; its full sequence is Phosphoribosylaminoimidazole-succinocarboxamide synthase (216 aa).

Belongs to the SAICAR synthetase family.

The enzyme catalyses 5-amino-1-(5-phospho-D-ribosyl)imidazole-4-carboxylate + L-aspartate + ATP = (2S)-2-[5-amino-1-(5-phospho-beta-D-ribosyl)imidazole-4-carboxamido]succinate + ADP + phosphate + 2 H(+). Its pathway is purine metabolism; IMP biosynthesis via de novo pathway; 5-amino-1-(5-phospho-D-ribosyl)imidazole-4-carboxamide from 5-amino-1-(5-phospho-D-ribosyl)imidazole-4-carboxylate: step 1/2. This is Phosphoribosylaminoimidazole-succinocarboxamide synthase (purC) from Aquifex aeolicus (strain VF5).